A 145-amino-acid polypeptide reads, in one-letter code: Small ribosomal subunit protein eS19 (145 aa).

Lys-23 bears the N6-acetyllysine mark. The residue at position 67 (Arg-67) is an Omega-N-methylarginine. An N6-acetyllysine mark is found at Lys-111 and Lys-115. Residue Lys-143 is modified to N6-succinyllysine.

This sequence belongs to the eukaryotic ribosomal protein eS19 family. In terms of assembly, component of the small ribosomal subunit. Part of the small subunit (SSU) processome, composed of more than 70 proteins and the RNA chaperone small nucleolar RNA (snoRNA) U3. Interacts with RPS19BP1; the interaction is direct and mediates the integration of RPS19 in state post-A1. Interacts with RPS19BP1.

It localises to the cytoplasm. The protein localises to the nucleus. The protein resides in the nucleolus. In terms of biological role, component of the small ribosomal subunit. The ribosome is a large ribonucleoprotein complex responsible for the synthesis of proteins in the cell. Required for pre-rRNA processing and maturation of 40S ribosomal subunits. Part of the small subunit (SSU) processome, first precursor of the small eukaryotic ribosomal subunit. During the assembly of the SSU processome in the nucleolus, many ribosome biogenesis factors, an RNA chaperone and ribosomal proteins associate with the nascent pre-rRNA and work in concert to generate RNA folding, modifications, rearrangements and cleavage as well as targeted degradation of pre-ribosomal RNA by the RNA exosome. The chain is Small ribosomal subunit protein eS19 (RPS19) from Oryctolagus cuniculus (Rabbit).